The chain runs to 122 residues: uncharacterized protein (122 aa).

The stretch at K46–N116 forms a coiled coil.

This is an uncharacterized protein from Invertebrate iridescent virus 6 (IIV-6).